We begin with the raw amino-acid sequence, 211 residues long: FMN-dependent NADH:quinone oxidoreductase (211 aa).

FMN is bound by residues serine 10 and 16–18 (STS).

This sequence belongs to the azoreductase type 1 family. In terms of assembly, homodimer. The cofactor is FMN.

It catalyses the reaction 2 a quinone + NADH + H(+) = 2 a 1,4-benzosemiquinone + NAD(+). The enzyme catalyses N,N-dimethyl-1,4-phenylenediamine + anthranilate + 2 NAD(+) = 2-(4-dimethylaminophenyl)diazenylbenzoate + 2 NADH + 2 H(+). In terms of biological role, quinone reductase that provides resistance to thiol-specific stress caused by electrophilic quinones. Its function is as follows. Also exhibits azoreductase activity. Catalyzes the reductive cleavage of the azo bond in aromatic azo compounds to the corresponding amines. This chain is FMN-dependent NADH:quinone oxidoreductase, found in Frankia casuarinae (strain DSM 45818 / CECT 9043 / HFP020203 / CcI3).